The following is a 360-amino-acid chain: tRNA N6-adenosine threonylcarbamoyltransferase (360 aa).

Fe cation contacts are provided by histidine 111 and histidine 115. Substrate-binding positions include 134-138, aspartate 167, glycine 180, aspartate 184, and asparagine 279; that span reads LVSGG. Residue aspartate 307 coordinates Fe cation.

The protein belongs to the KAE1 / TsaD family. It depends on Fe(2+) as a cofactor.

It localises to the cytoplasm. The enzyme catalyses L-threonylcarbamoyladenylate + adenosine(37) in tRNA = N(6)-L-threonylcarbamoyladenosine(37) in tRNA + AMP + H(+). Functionally, required for the formation of a threonylcarbamoyl group on adenosine at position 37 (t(6)A37) in tRNAs that read codons beginning with adenine. Is involved in the transfer of the threonylcarbamoyl moiety of threonylcarbamoyl-AMP (TC-AMP) to the N6 group of A37, together with TsaE and TsaB. TsaD likely plays a direct catalytic role in this reaction. The polypeptide is tRNA N6-adenosine threonylcarbamoyltransferase (Acaryochloris marina (strain MBIC 11017)).